Reading from the N-terminus, the 155-residue chain is Small ribosomal subunit protein uS17 (155 aa).

An N-acetylalanine modification is found at Ala2.

The protein belongs to the universal ribosomal protein uS17 family.

The polypeptide is Small ribosomal subunit protein uS17 (Drosophila pseudoobscura pseudoobscura (Fruit fly)).